We begin with the raw amino-acid sequence, 356 residues long: Branched-chain-amino-acid transaminase 1 (356 aa).

Position 197 is an N6-(pyridoxal phosphate)lysine (lysine 197).

Belongs to the class-IV pyridoxal-phosphate-dependent aminotransferase family. It depends on pyridoxal 5'-phosphate as a cofactor.

It carries out the reaction L-leucine + 2-oxoglutarate = 4-methyl-2-oxopentanoate + L-glutamate. The enzyme catalyses L-isoleucine + 2-oxoglutarate = (S)-3-methyl-2-oxopentanoate + L-glutamate. The catalysed reaction is L-valine + 2-oxoglutarate = 3-methyl-2-oxobutanoate + L-glutamate. The protein operates within amino-acid biosynthesis; L-isoleucine biosynthesis; L-isoleucine from 2-oxobutanoate: step 4/4. Its pathway is amino-acid biosynthesis; L-leucine biosynthesis; L-leucine from 3-methyl-2-oxobutanoate: step 4/4. It functions in the pathway amino-acid biosynthesis; L-valine biosynthesis; L-valine from pyruvate: step 4/4. Its activity is regulated as follows. Inhibited by canaline. In terms of biological role, transaminates branched-chain amino acids and ketoglutarate. Involved in the final step of the methionine regeneration pathway, where ketomethiobutyrate (KMTB) is converted to methionine via a transamination. The amino donor preference is isoleucine, leucine, valine, phenylalanine, and tyrosine. This Bacillus subtilis (strain 168) protein is Branched-chain-amino-acid transaminase 1 (ilvE).